The primary structure comprises 141 residues: 2S seed storage albumin protein (141 aa).

The signal sequence occupies residues 1 to 22; it reads MARLTSIIALFAVALLVADAYA. The propeptide occupies 23–35; it reads YRTTITTVEVEEN. Cystine bridges form between C43–C97, C55–C86, C87–C132, and C99–C139.

This sequence belongs to the 2S seed storage albumins family. In terms of assembly, the mature protein consists of a small and a large chain linked by 2 disulfide bonds.

It is found in the vacuole. The protein localises to the aleurone grain. Functionally, this is a 2S seed storage protein. The chain is 2S seed storage albumin protein from Cucurbita maxima (Pumpkin).